The primary structure comprises 1369 residues: Rho guanine nucleotide exchange factor 10 (1369 aa).

Residues 1 to 106 (MRPPGFLSRA…ETTPVAEPTK (106 aa)) form a disordered region. Acidic residues predominate over residues 46–64 (NNEEEEGEQFDFDSGDEIP). Residues 83-100 (EAPAPTGGEDGAGAETTP) are compositionally biased toward low complexity. Residue serine 180 is modified to Phosphoserine. The tract at residues 184-254 (EAETPEVTED…ENSDSEPDEM (71 aa)) is disordered. The span at 196 to 209 (PNSLSSEEPPTSED) shows a compositional bias: polar residues. Residues 304 to 355 (KKQLSHDLTRLKEHYEKKMRDLMASTVGVVEIQQLRQKHELKMQKLVKAAKD) adopt a coiled-coil conformation. Serine 379 carries the phosphoserine modification. One can recognise a DH domain in the interval 421–608 (VRRYILGSVV…ETLAEKLNER (188 aa)). 2 disordered regions span residues 1226–1260 (KDKS…LSQG) and 1277–1297 (QKSD…SSSL). A compositionally biased stretch (low complexity) spans 1279 to 1296 (SDLSSSSGSLSLSHGSSS). Phosphoserine is present on serine 1287. An N5-methylglutamine modification is found at glutamine 1338.

Post-translationally, methylated at Gln-1338 by N6AMT1.

Functionally, may play a role in developmental myelination of peripheral nerves. The protein is Rho guanine nucleotide exchange factor 10 (ARHGEF10) of Homo sapiens (Human).